The primary structure comprises 417 residues: Serine hydroxymethyltransferase (417 aa).

(6S)-5,6,7,8-tetrahydrofolate contacts are provided by residues L112 and 116-118 (GHL). Position 221 is an N6-(pyridoxal phosphate)lysine (K221). E247 contributes to the (6S)-5,6,7,8-tetrahydrofolate binding site.

This sequence belongs to the SHMT family. Homodimer. Pyridoxal 5'-phosphate serves as cofactor.

It localises to the cytoplasm. The enzyme catalyses (6R)-5,10-methylene-5,6,7,8-tetrahydrofolate + glycine + H2O = (6S)-5,6,7,8-tetrahydrofolate + L-serine. It functions in the pathway one-carbon metabolism; tetrahydrofolate interconversion. It participates in amino-acid biosynthesis; glycine biosynthesis; glycine from L-serine: step 1/1. Its function is as follows. Catalyzes the reversible interconversion of serine and glycine with tetrahydrofolate (THF) serving as the one-carbon carrier. This reaction serves as the major source of one-carbon groups required for the biosynthesis of purines, thymidylate, methionine, and other important biomolecules. Also exhibits THF-independent aldolase activity toward beta-hydroxyamino acids, producing glycine and aldehydes, via a retro-aldol mechanism. In Borrelia hermsii (strain HS1 / DAH), this protein is Serine hydroxymethyltransferase.